Reading from the N-terminus, the 727-residue chain is Polyribonucleotide nucleotidyltransferase (727 aa).

Mg(2+) is bound by residues Asp488 and Asp494. A KH domain is found at 555-614; it reads PKLYTMKINPEKIRDVIGKGGATIRALTDETGCQINIEEDGTITIAATEAAKADEAKRRI. In terms of domain architecture, S1 motif spans 624–692; that stretch reads GKVYEGPVTK…DKGRVKLSMK (69 aa). The disordered stretch occupies residues 691–727; that stretch reads MKALADRPAGDSGRPAPAERGERRERRDGGASEQQQQ. A compositionally biased stretch (basic and acidic residues) spans 707–720; that stretch reads PAERGERRERRDGG.

The protein belongs to the polyribonucleotide nucleotidyltransferase family. The cofactor is Mg(2+).

The protein localises to the cytoplasm. The catalysed reaction is RNA(n+1) + phosphate = RNA(n) + a ribonucleoside 5'-diphosphate. Involved in mRNA degradation. Catalyzes the phosphorolysis of single-stranded polyribonucleotides processively in the 3'- to 5'-direction. This is Polyribonucleotide nucleotidyltransferase from Acidovorax ebreus (strain TPSY) (Diaphorobacter sp. (strain TPSY)).